A 611-amino-acid chain; its full sequence is Rho GTPase-activating protein gacN (611 aa).

Residues 24 to 219 form the Rho-GAP domain; it reads KTFKKILKPG…VLIEEFHVLY (196 aa). The stretch at 236–499 forms a coiled coil; it reads IREDKRSTSE…TKLQKSSSSS (264 aa). Positions 476-491 are enriched in basic and acidic residues; it reads NQLEKEKSKLQDELTK. Residues 476 to 550 are disordered; that stretch reads NQLEKEKSKL…TTPPPPLDED (75 aa). Composition is skewed to low complexity over residues 495–509 and 527–540; these read SSSSSSSSSSSSSSS and TTTTTTTTSPAQQP.

The protein localises to the cytoplasm. In terms of biological role, rho GTPase-activating protein involved in the signal transduction pathway. This chain is Rho GTPase-activating protein gacN (gacN), found in Dictyostelium discoideum (Social amoeba).